A 228-amino-acid polypeptide reads, in one-letter code: Sec-independent protein translocase protein TatB (228 aa).

The helical transmembrane segment at 1 to 21 (MFDFGLGELVFVGIIALIVLG) threads the bilayer. Disordered regions lie at residues 138-162 (RSYA…AETD) and 195-228 (PVPH…VRKS). The span at 206-228 (AISRKRDLRPKSRAKPKLRVRKS) shows a compositional bias: basic residues.

It belongs to the TatB family. In terms of assembly, the Tat system comprises two distinct complexes: a TatABC complex, containing multiple copies of TatA, TatB and TatC subunits, and a separate TatA complex, containing only TatA subunits. Substrates initially bind to the TatABC complex, which probably triggers association of the separate TatA complex to form the active translocon.

The protein localises to the cell inner membrane. Its function is as follows. Part of the twin-arginine translocation (Tat) system that transports large folded proteins containing a characteristic twin-arginine motif in their signal peptide across membranes. Together with TatC, TatB is part of a receptor directly interacting with Tat signal peptides. TatB may form an oligomeric binding site that transiently accommodates folded Tat precursor proteins before their translocation. This chain is Sec-independent protein translocase protein TatB, found in Neisseria meningitidis serogroup A / serotype 4A (strain DSM 15465 / Z2491).